We begin with the raw amino-acid sequence, 117 residues long: LLAALRGQSLGLAAMSSGTHRLTPEERNQAILDLKAAGWSELSERDAIYKEFSFRNFNQAFGFMSRVALQAEKMNHHPEWFNVYNKVQITLTSHDCGELTKKDVKLAQFIEKAAASV.

Residues Lys101, Lys105, and Lys112 each carry the N6-acetyllysine; alternate modification. N6-succinyllysine; alternate occurs at positions 101, 105, and 112.

It belongs to the pterin-4-alpha-carbinolamine dehydratase family. Homotetramer. Interacts with DYRK1B.

It carries out the reaction (4aS,6R)-4a-hydroxy-L-erythro-5,6,7,8-tetrahydrobiopterin = (6R)-L-erythro-6,7-dihydrobiopterin + H2O. Involved in tetrahydrobiopterin biosynthesis. Seems to both prevent the formation of 7-pterins and accelerate the formation of quinonoid-BH2. Its function is as follows. Regulates the dimerization of homeodomain protein HNF-1-alpha and enhances its transcriptional activity. The protein is Pterin-4-alpha-carbinolamine dehydratase 2 (PCBD2) of Pongo abelii (Sumatran orangutan).